Reading from the N-terminus, the 436-residue chain is Serine--tRNA ligase (436 aa).

239 to 241 (TAE) provides a ligand contact to L-serine. Residue 270 to 272 (RLE) participates in ATP binding. E293 contributes to the L-serine binding site. Residue 357-360 (EISS) participates in ATP binding. Residue S393 participates in L-serine binding.

Belongs to the class-II aminoacyl-tRNA synthetase family. Type-1 seryl-tRNA synthetase subfamily. In terms of assembly, homodimer. The tRNA molecule binds across the dimer.

Its subcellular location is the cytoplasm. The enzyme catalyses tRNA(Ser) + L-serine + ATP = L-seryl-tRNA(Ser) + AMP + diphosphate + H(+). It carries out the reaction tRNA(Sec) + L-serine + ATP = L-seryl-tRNA(Sec) + AMP + diphosphate + H(+). It participates in aminoacyl-tRNA biosynthesis; selenocysteinyl-tRNA(Sec) biosynthesis; L-seryl-tRNA(Sec) from L-serine and tRNA(Sec): step 1/1. In terms of biological role, catalyzes the attachment of serine to tRNA(Ser). Is also able to aminoacylate tRNA(Sec) with serine, to form the misacylated tRNA L-seryl-tRNA(Sec), which will be further converted into selenocysteinyl-tRNA(Sec). The chain is Serine--tRNA ligase from Blochmanniella floridana.